A 246-amino-acid polypeptide reads, in one-letter code: Probable transcriptional regulatory protein YebC (246 aa).

The interval 1–20 (MAGHSKWANTRHRKAAQDAK) is disordered.

Belongs to the TACO1 family.

It localises to the cytoplasm. This chain is Probable transcriptional regulatory protein YebC, found in Shigella boydii serotype 4 (strain Sb227).